Reading from the N-terminus, the 528-residue chain is Glutamate--cysteine ligase (528 aa).

Belongs to the glutamate--cysteine ligase type 1 family. Type 1 subfamily.

It catalyses the reaction L-cysteine + L-glutamate + ATP = gamma-L-glutamyl-L-cysteine + ADP + phosphate + H(+). It participates in sulfur metabolism; glutathione biosynthesis; glutathione from L-cysteine and L-glutamate: step 1/2. The sequence is that of Glutamate--cysteine ligase from Janthinobacterium sp. (strain Marseille) (Minibacterium massiliensis).